The following is a 157-amino-acid chain: CAPA peptides (157 aa).

An N-terminal signal peptide occupies residues 1 to 21 (MQPTMRIIVSMALLAYAVASA). A propeptide spanning residues 22–28 (YHSNVKL) is cleaved from the precursor. A Valine amide modification is found at Val-42. A propeptide spanning residues 45 to 66 (ASGNTWQLPLNDLYPEYEPAQV) is cleaved from the precursor. Residue Gln-69 is modified to Pyrrolidone carboxylic acid; partial. Val-76 bears the Valine amide mark. Residues Leu-85 and Leu-117 each carry the leucine amide modification. Positions 120–157 (AFKNDDDEITIQNESNDHSEPEQTELIHEDRRKRQTLN) are excised as a propeptide. The disordered stretch occupies residues 131 to 157 (QNESNDHSEPEQTELIHEDRRKRQTLN). Residues 134–151 (SNDHSEPEQTELIHEDRR) are compositionally biased toward basic and acidic residues.

This sequence belongs to the pyrokinin family. In terms of tissue distribution, CAPA-periviscerokinin 1: Expressed in corpora cardiaca (CC), corpora allata (CA), antennal lobe (AL) and gnathal ganglion (GNG) (at protein level). Expression detected in most animals in CC and CA and in some animals in AL and GNG (at protein level). CAPA-periviscerokinin 2: Expressed in corpora cardiaca (CC), corpora allata (CA), antennal lobe (AL) and gnathal ganglion (GNG) (at protein level). For non-pyroglutamate form, expression in AL detected in all animals, in CC, CA and GNG in most animals (at protein level). For pyroglutamate form, expression in CC and CA detected in most animals, in AL and GNG in some animals (at protein level). CAPA-periviscerokinin 3: Expressed in corpora cardiaca (CC), corpora allata (CA), antennal lobe (AL) and gnathal ganglion (GNG). Expression detected in most animals in CC and CA and in some animals in AL and GNG (at protein level). CAPA-precursor-related peptide 3: Expressed in corpora cardiaca (CC), corpora allata (CA), antennal lobe (AL) and gnathal ganglion (GNG) (at protein level). Expression in CC and CA detected in some animals, expression in Al and GNG detected in few animals (at protein level). CAPA-trypto-pyrokinin: Expressed in corpora cardiaca (CC), corpora allata (CA), antennal lobe (AL) and gnathal ganglion (GNG) (at protein level). Expression in CC, CA and GNG detected in most animals, in AL in some animals (at protein level).

Its subcellular location is the secreted. Functionally, myoactive. The chain is CAPA peptides from Agrotis ipsilon (Black cutworm moth).